A 137-amino-acid polypeptide reads, in one-letter code: Putative pre-16S rRNA nuclease (137 aa).

This sequence belongs to the YqgF nuclease family.

The protein localises to the cytoplasm. In terms of biological role, could be a nuclease involved in processing of the 5'-end of pre-16S rRNA. This is Putative pre-16S rRNA nuclease from Bacillus cytotoxicus (strain DSM 22905 / CIP 110041 / 391-98 / NVH 391-98).